A 296-amino-acid polypeptide reads, in one-letter code: UDP-N-acetylenolpyruvoylglucosamine reductase (296 aa).

The region spanning 26–191 (RIGGPANYFK…LSATFRLSRN (166 aa)) is the FAD-binding PCMH-type domain. Residue R170 is part of the active site. Residue C218 is the Proton donor of the active site. E287 is an active-site residue.

The protein belongs to the MurB family. It depends on FAD as a cofactor.

The protein localises to the cytoplasm. It carries out the reaction UDP-N-acetyl-alpha-D-muramate + NADP(+) = UDP-N-acetyl-3-O-(1-carboxyvinyl)-alpha-D-glucosamine + NADPH + H(+). Its pathway is cell wall biogenesis; peptidoglycan biosynthesis. Functionally, cell wall formation. The polypeptide is UDP-N-acetylenolpyruvoylglucosamine reductase (Chlamydia abortus (strain DSM 27085 / S26/3) (Chlamydophila abortus)).